Here is a 101-residue protein sequence, read N- to C-terminus: Small ribosomal subunit protein uS14 (101 aa).

Belongs to the universal ribosomal protein uS14 family. As to quaternary structure, part of the 30S ribosomal subunit. Contacts proteins S3 and S10.

In terms of biological role, binds 16S rRNA, required for the assembly of 30S particles and may also be responsible for determining the conformation of the 16S rRNA at the A site. The protein is Small ribosomal subunit protein uS14 of Pseudomonas putida (strain W619).